Reading from the N-terminus, the 655-residue chain is DNA-directed RNA polymerase III subunit rpc3 (655 aa).

3 disordered regions span residues Val153 to Gln183, Lys270 to Glu305, and Arg402 to Gly445. Positions Arg276–Thr287 are enriched in basic and acidic residues. The span at Ser291–Glu305 shows a compositional bias: acidic residues. Positions Leu405–Pro417 are enriched in polar residues. Positions Asp418–Glu427 are enriched in basic and acidic residues. Residues Thr582–Phe603 form a leucine-zipper region.

The protein belongs to the RNA polymerase beta chain family. As to quaternary structure, component of the RNA polymerase III (Pol III) complex consisting of 17 subunits.

The protein localises to the nucleus. DNA-dependent RNA polymerase catalyzes the transcription of DNA into RNA using the four ribonucleoside triphosphates as substrates. Specific core component of RNA polymerase III which synthesizes small RNAs, such as 5S rRNA and tRNAs. This chain is DNA-directed RNA polymerase III subunit rpc3 (rpc82), found in Neosartorya fischeri (strain ATCC 1020 / DSM 3700 / CBS 544.65 / FGSC A1164 / JCM 1740 / NRRL 181 / WB 181) (Aspergillus fischerianus).